Here is a 317-residue protein sequence, read N- to C-terminus: 4-hydroxy-3-methylbut-2-enyl diphosphate reductase (317 aa).

C12 lines the [4Fe-4S] cluster pocket. (2E)-4-hydroxy-3-methylbut-2-enyl diphosphate is bound by residues H41 and H74. Dimethylallyl diphosphate is bound by residues H41 and H74. Isopentenyl diphosphate contacts are provided by H41 and H74. C97 is a [4Fe-4S] cluster binding site. Residue H125 coordinates (2E)-4-hydroxy-3-methylbut-2-enyl diphosphate. H125 contacts dimethylallyl diphosphate. H125 lines the isopentenyl diphosphate pocket. E127 serves as the catalytic Proton donor. Residue T168 participates in (2E)-4-hydroxy-3-methylbut-2-enyl diphosphate binding. Residue C198 coordinates [4Fe-4S] cluster. Positions 226, 227, 228, and 270 each coordinate (2E)-4-hydroxy-3-methylbut-2-enyl diphosphate. S226, S227, N228, and S270 together coordinate dimethylallyl diphosphate. S226, S227, N228, and S270 together coordinate isopentenyl diphosphate.

It belongs to the IspH family. Homodimer. Requires [4Fe-4S] cluster as cofactor.

It catalyses the reaction isopentenyl diphosphate + 2 oxidized [2Fe-2S]-[ferredoxin] + H2O = (2E)-4-hydroxy-3-methylbut-2-enyl diphosphate + 2 reduced [2Fe-2S]-[ferredoxin] + 2 H(+). The catalysed reaction is dimethylallyl diphosphate + 2 oxidized [2Fe-2S]-[ferredoxin] + H2O = (2E)-4-hydroxy-3-methylbut-2-enyl diphosphate + 2 reduced [2Fe-2S]-[ferredoxin] + 2 H(+). It functions in the pathway isoprenoid biosynthesis; dimethylallyl diphosphate biosynthesis; dimethylallyl diphosphate from (2E)-4-hydroxy-3-methylbutenyl diphosphate: step 1/1. The protein operates within isoprenoid biosynthesis; isopentenyl diphosphate biosynthesis via DXP pathway; isopentenyl diphosphate from 1-deoxy-D-xylulose 5-phosphate: step 6/6. Catalyzes the conversion of 1-hydroxy-2-methyl-2-(E)-butenyl 4-diphosphate (HMBPP) into a mixture of isopentenyl diphosphate (IPP) and dimethylallyl diphosphate (DMAPP). Acts in the terminal step of the DOXP/MEP pathway for isoprenoid precursor biosynthesis. The protein is 4-hydroxy-3-methylbut-2-enyl diphosphate reductase of Serratia proteamaculans (strain 568).